The chain runs to 428 residues: Stromal membrane-associated protein 2 (428 aa).

The 127-residue stretch at 13–139 (QAVLANLLLE…INVLRKEKDD (127 aa)) folds into the Arf-GAP domain. The C4-type zinc finger occupies 28–51 (CADCQSKGPRWASWNIGVFICIRC). S127, S219, S224, S230, and S239 each carry phosphoserine. An interaction with clathrin heavy chains region spans residues 163 to 231 (MPQKKEDAQL…SVSRKAVGSM (69 aa)). The interval 218–262 (PSPSSVSRKAVGSMPTAGSAGSVPENLNLFPEPGSKSEETGKKQL) is disordered. Basic and acidic residues predominate over residues 252–262 (SKSEETGKKQL). An interaction with PICALM region spans residues 339-428 (MGGMQASMMG…NQTLSPQMWK (90 aa)).

In terms of assembly, interacts with ARF1. Interacts with PICALM and clathrin heavy chains.

Its subcellular location is the cytoplasm. Functionally, GTPase activating protein that acts on ARF1. Can also activate ARF6 (in vitro). May play a role in clathrin-dependent retrograde transport from early endosomes to the trans-Golgi network. This is Stromal membrane-associated protein 2 (Smap2) from Mus musculus (Mouse).